Consider the following 135-residue polypeptide: MIIDTSALLAYFDAAEPDHAAVSECIDSSADALVVSPYVVAELDYLVATRVGVDAELAVLRELAGGAWELANCGAAEIEQAARIVTKYQDQRIGIADAANVVLADRYRTRTILTLDRRHFSALRPIGGGRFTVIP.

The PINc domain maps to 1–118 (MIIDTSALLA…TRTILTLDRR (118 aa)). D4 and D97 together coordinate Mg(2+).

The protein belongs to the PINc/VapC protein family. It depends on Mg(2+) as a cofactor.

Its function is as follows. Toxic component of a type II toxin-antitoxin (TA) system. An RNase. Upon expression in M.smegmatis inhibits colony formation. Its toxic effect is neutralized by coexpression with cognate antitoxin VapB26. The polypeptide is Ribonuclease VapC26 (Mycobacterium tuberculosis (strain ATCC 25618 / H37Rv)).